The chain runs to 113 residues: UPF0122 protein LSEI_1603 (113 aa).

The protein belongs to the UPF0122 family.

Functionally, might take part in the signal recognition particle (SRP) pathway. This is inferred from the conservation of its genetic proximity to ftsY/ffh. May be a regulatory protein. In Lacticaseibacillus paracasei (strain ATCC 334 / BCRC 17002 / CCUG 31169 / CIP 107868 / KCTC 3260 / NRRL B-441) (Lactobacillus paracasei), this protein is UPF0122 protein LSEI_1603.